Reading from the N-terminus, the 653-residue chain is Large subunit GTPase 1 homolog (653 aa).

The segment at 1-31 (MGRRRAPAGGSLGRALMRHQTQRSRSHRHTD) is disordered. The segment covering 16-28 (LMRHQTQRSRSHR) has biased composition (basic residues). Serine 93 and serine 97 each carry phosphoserine. The CP-type G domain maps to 164–445 (WRQLWRVIER…LCDCPGLVMP (282 aa)). Residue 212-215 (NKAD) participates in GTP binding. The tract at residues 251 to 358 (DSEEEANKDD…RKTPQKRQLH (108 aa)) is disordered. At serine 252 the chain carries Phosphoserine. Residues 258 to 288 (KDDRQSNTAEFEHSSFDEAEISHSETEHLPA) are compositionally biased toward basic and acidic residues. Residues 299-333 (TTDEDDSEYEDCPEEEEDDWQTCSEEDGPEEEDCG) show a composition bias toward acidic residues. Residues 394 to 401 (GYPNVGKS) and 438 to 441 (DCPG) each bind GTP. The disordered stretch occupies residues 630–653 (SENGAGKPWKKHGNRNKKEKSCRL). The span at 637–647 (PWKKHGNRNKK) shows a compositional bias: basic residues.

It belongs to the TRAFAC class YlqF/YawG GTPase family. LSG1 subfamily.

Its subcellular location is the cytoplasm. The protein resides in the endoplasmic reticulum. It localises to the nucleus. It is found in the cajal body. It catalyses the reaction GTP + H2O = GDP + phosphate + H(+). Its function is as follows. Functions as a GTPase. May act by mediating the release of NMD3 from the 60S ribosomal subunit after export into the cytoplasm during the 60S ribosomal subunit maturation. This chain is Large subunit GTPase 1 homolog, found in Macaca fascicularis (Crab-eating macaque).